The sequence spans 308 residues: 4-hydroxy-tetrahydrodipicolinate synthase (308 aa).

T53 is a pyruvate binding site. Y141 serves as the catalytic Proton donor/acceptor. Residue K169 is the Schiff-base intermediate with substrate of the active site. V209 is a binding site for pyruvate.

This sequence belongs to the DapA family. Homotetramer; dimer of dimers.

The protein localises to the cytoplasm. It carries out the reaction L-aspartate 4-semialdehyde + pyruvate = (2S,4S)-4-hydroxy-2,3,4,5-tetrahydrodipicolinate + H2O + H(+). The protein operates within amino-acid biosynthesis; L-lysine biosynthesis via DAP pathway; (S)-tetrahydrodipicolinate from L-aspartate: step 3/4. Catalyzes the condensation of (S)-aspartate-beta-semialdehyde [(S)-ASA] and pyruvate to 4-hydroxy-tetrahydrodipicolinate (HTPA). In Acidothermus cellulolyticus (strain ATCC 43068 / DSM 8971 / 11B), this protein is 4-hydroxy-tetrahydrodipicolinate synthase.